Reading from the N-terminus, the 196-residue chain is Pyridoxal 5'-phosphate synthase subunit PdxT (196 aa).

47 to 49 (GES) is a binding site for L-glutamine. The active-site Nucleophile is the Cys-79. L-glutamine contacts are provided by residues Arg-106 and 134–135 (IR). Catalysis depends on charge relay system residues His-170 and Glu-172.

This sequence belongs to the glutaminase PdxT/SNO family. In terms of assembly, in the presence of PdxS, forms a dodecamer of heterodimers. Only shows activity in the heterodimer.

The catalysed reaction is aldehydo-D-ribose 5-phosphate + D-glyceraldehyde 3-phosphate + L-glutamine = pyridoxal 5'-phosphate + L-glutamate + phosphate + 3 H2O + H(+). It catalyses the reaction L-glutamine + H2O = L-glutamate + NH4(+). Its pathway is cofactor biosynthesis; pyridoxal 5'-phosphate biosynthesis. Its function is as follows. Catalyzes the hydrolysis of glutamine to glutamate and ammonia as part of the biosynthesis of pyridoxal 5'-phosphate. The resulting ammonia molecule is channeled to the active site of PdxS. The sequence is that of Pyridoxal 5'-phosphate synthase subunit PdxT from Bacillus velezensis (strain DSM 23117 / BGSC 10A6 / LMG 26770 / FZB42) (Bacillus amyloliquefaciens subsp. plantarum).